Consider the following 682-residue polypeptide: RNA helicase NPH-II (682 aa).

The Helicase ATP-binding domain maps to 181–354; sequence FELLRKRKQI…EFLPDVEFYH (174 aa). 194 to 201 lines the ATP pocket; the sequence is GSTGIGKT. The short motif at 303–306 is the DEXH box element; that stretch reads DEIH. The Helicase C-terminal domain occupies 386–551; sequence NISTTLNWCR…KFKLSLPNDL (166 aa).

Belongs to the DEAD box helicase family. DEAH subfamily. As to quaternary structure, monomer.

It localises to the virion. It catalyses the reaction ATP + H2O = ADP + phosphate + H(+). Its function is as follows. NTP-dependent helicase that catalyzes unidirectional unwinding of 3'tailed duplex RNAs and plays an important role during transcription of early mRNAs, presumably by preventing R-loop formation behind the elongating RNA polymerase. Might also play a role in the export of newly synthesized mRNA chains out of the core into the cytoplasm. Required for replication and propagation of viral particles. This chain is RNA helicase NPH-II (NPH2), found in Vertebrata (FPV).